We begin with the raw amino-acid sequence, 602 residues long: Glutamine--fructose-6-phosphate aminotransferase [isomerizing] (602 aa).

Cys-2 (nucleophile; for GATase activity) is an active-site residue. One can recognise a Glutamine amidotransferase type-2 domain in the interval 2 to 219 (CGIIGYIGDR…DGEYAILTKD (218 aa)). 2 consecutive SIS domains span residues 280–420 (VAEE…VLGT) and 453–592 (LAET…PDKP). Lys-597 acts as the For Fru-6P isomerization activity in catalysis.

As to quaternary structure, homodimer.

The protein localises to the cytoplasm. It catalyses the reaction D-fructose 6-phosphate + L-glutamine = D-glucosamine 6-phosphate + L-glutamate. In terms of biological role, catalyzes the first step in hexosamine metabolism, converting fructose-6P into glucosamine-6P using glutamine as a nitrogen source. This Thermococcus kodakarensis (strain ATCC BAA-918 / JCM 12380 / KOD1) (Pyrococcus kodakaraensis (strain KOD1)) protein is Glutamine--fructose-6-phosphate aminotransferase [isomerizing].